Reading from the N-terminus, the 188-residue chain is Large ribosomal subunit protein eL18z (188 aa).

Belongs to the eukaryotic ribosomal protein eL18 family.

The sequence is that of Large ribosomal subunit protein eL18z (RPL18A) from Arabidopsis thaliana (Mouse-ear cress).